Reading from the N-terminus, the 180-residue chain is MSALTIYSETETREPLWHSTDAAEIADKLNARGVRFERWEADRDLGQDPAAETVINAYQHAIDKLVAEKGYQSWDVISLRADNPQKEALRAKFLNEHTHGEDEVRFFVEGAGLFCLHIDDQVYQVLCEKNDLISVPAGTPHWFDMGSEPNFTAIRIFDNPEGWIAQFTGDAIADAYPRLP.

Fe(2+) contacts are provided by histidine 97, histidine 99, glutamate 103, and histidine 141. 4 residues coordinate Ni(2+): histidine 97, histidine 99, glutamate 103, and histidine 141.

Belongs to the acireductone dioxygenase (ARD) family. Monomer. Requires Fe(2+) as cofactor. It depends on Ni(2+) as a cofactor.

It carries out the reaction 1,2-dihydroxy-5-(methylsulfanyl)pent-1-en-3-one + O2 = 3-(methylsulfanyl)propanoate + CO + formate + 2 H(+). The enzyme catalyses 1,2-dihydroxy-5-(methylsulfanyl)pent-1-en-3-one + O2 = 4-methylsulfanyl-2-oxobutanoate + formate + 2 H(+). Its pathway is amino-acid biosynthesis; L-methionine biosynthesis via salvage pathway; L-methionine from S-methyl-5-thio-alpha-D-ribose 1-phosphate: step 5/6. Its function is as follows. Catalyzes 2 different reactions between oxygen and the acireductone 1,2-dihydroxy-3-keto-5-methylthiopentene (DHK-MTPene) depending upon the metal bound in the active site. Fe-containing acireductone dioxygenase (Fe-ARD) produces formate and 2-keto-4-methylthiobutyrate (KMTB), the alpha-ketoacid precursor of methionine in the methionine recycle pathway. Ni-containing acireductone dioxygenase (Ni-ARD) produces methylthiopropionate, carbon monoxide and formate, and does not lie on the methionine recycle pathway. This Enterobacter sp. (strain 638) protein is Acireductone dioxygenase.